A 28-amino-acid polypeptide reads, in one-letter code: leu operon leader peptide (28 aa).

Its function is as follows. Involved in control of the biosynthesis of leucine. This chain is leu operon leader peptide (leuL), found in Salmonella typhimurium (strain LT2 / SGSC1412 / ATCC 700720).